Here is a 406-residue protein sequence, read N- to C-terminus: Phosphopentomutase (406 aa).

Mn(2+) is bound by residues aspartate 10, aspartate 305, histidine 310, aspartate 346, histidine 347, and histidine 358.

It belongs to the phosphopentomutase family. It depends on Mn(2+) as a cofactor.

The protein localises to the cytoplasm. The catalysed reaction is 2-deoxy-alpha-D-ribose 1-phosphate = 2-deoxy-D-ribose 5-phosphate. It carries out the reaction alpha-D-ribose 1-phosphate = D-ribose 5-phosphate. It functions in the pathway carbohydrate degradation; 2-deoxy-D-ribose 1-phosphate degradation; D-glyceraldehyde 3-phosphate and acetaldehyde from 2-deoxy-alpha-D-ribose 1-phosphate: step 1/2. Its function is as follows. Isomerase that catalyzes the conversion of deoxy-ribose 1-phosphate (dRib-1-P) and ribose 1-phosphate (Rib-1-P) to deoxy-ribose 5-phosphate (dRib-5-P) and ribose 5-phosphate (Rib-5-P), respectively. The chain is Phosphopentomutase from Vibrio campbellii (strain ATCC BAA-1116).